Consider the following 341-residue polypeptide: GTP 3',8-cyclase (341 aa).

In terms of domain architecture, Radical SAM core spans 11-231 (KRNRPLRDLR…DLINKHMPVE (221 aa)). Arginine 20 contributes to the GTP binding site. Residues cysteine 27 and cysteine 31 each coordinate [4Fe-4S] cluster. Tyrosine 33 provides a ligand contact to S-adenosyl-L-methionine. Residue cysteine 34 participates in [4Fe-4S] cluster binding. Arginine 75 contacts GTP. S-adenosyl-L-methionine is bound at residue glycine 79. Residue threonine 106 coordinates GTP. Serine 130 lines the S-adenosyl-L-methionine pocket. Position 167 (lysine 167) interacts with GTP. Methionine 201 contacts S-adenosyl-L-methionine. Positions 265 and 268 each coordinate [4Fe-4S] cluster. Residue 270–272 (RAR) participates in GTP binding. Residue cysteine 282 coordinates [4Fe-4S] cluster.

The protein belongs to the radical SAM superfamily. MoaA family. In terms of assembly, monomer and homodimer. [4Fe-4S] cluster is required as a cofactor.

The enzyme catalyses GTP + AH2 + S-adenosyl-L-methionine = (8S)-3',8-cyclo-7,8-dihydroguanosine 5'-triphosphate + 5'-deoxyadenosine + L-methionine + A + H(+). Its pathway is cofactor biosynthesis; molybdopterin biosynthesis. Catalyzes the cyclization of GTP to (8S)-3',8-cyclo-7,8-dihydroguanosine 5'-triphosphate. Required for both nitrate assimilation and respiration. The chain is GTP 3',8-cyclase from Bacillus subtilis (strain 168).